The primary structure comprises 865 residues: Protein translocase subunit SecA (865 aa).

ATP contacts are provided by residues glutamine 85, 103 to 107 (GEGKT), and aspartate 505. Zn(2+) contacts are provided by cysteine 847, cysteine 849, cysteine 858, and histidine 859.

This sequence belongs to the SecA family. Monomer and homodimer. Part of the essential Sec protein translocation apparatus which comprises SecA, SecYEG and auxiliary proteins SecDF. Other proteins may also be involved. Requires Zn(2+) as cofactor.

It localises to the cell membrane. The protein resides in the cytoplasm. It catalyses the reaction ATP + H2O + cellular proteinSide 1 = ADP + phosphate + cellular proteinSide 2.. Part of the Sec protein translocase complex. Interacts with the SecYEG preprotein conducting channel. Has a central role in coupling the hydrolysis of ATP to the transfer of proteins into and across the cell membrane, serving as an ATP-driven molecular motor driving the stepwise translocation of polypeptide chains across the membrane. The polypeptide is Protein translocase subunit SecA (Lactococcus lactis subsp. cremoris (strain MG1363)).